The sequence spans 285 residues: Polyamine aminopropyltransferase (285 aa).

Residues 2-237 enclose the PABS domain; that stretch reads DLWFSESHTP…GYWCFGFASK (236 aa). Q31 contacts S-methyl-5'-thioadenosine. D86 lines the spermidine pocket. S-methyl-5'-thioadenosine is bound by residues E106 and 137-138; that span reads DG. D155 serves as the catalytic Proton acceptor.

The protein belongs to the spermidine/spermine synthase family. As to quaternary structure, homodimer or homotetramer.

The protein localises to the cytoplasm. It catalyses the reaction S-adenosyl 3-(methylsulfanyl)propylamine + putrescine = S-methyl-5'-thioadenosine + spermidine + H(+). Its pathway is amine and polyamine biosynthesis; spermidine biosynthesis; spermidine from putrescine: step 1/1. Functionally, catalyzes the irreversible transfer of a propylamine group from the amino donor S-adenosylmethioninamine (decarboxy-AdoMet) to putrescine (1,4-diaminobutane) to yield spermidine. This is Polyamine aminopropyltransferase from Streptococcus uberis (strain ATCC BAA-854 / 0140J).